Reading from the N-terminus, the 68-residue chain is Large ribosomal subunit protein uL29 (68 aa).

Belongs to the universal ribosomal protein uL29 family.

The protein is Large ribosomal subunit protein uL29 of Erythrobacter litoralis (strain HTCC2594).